Reading from the N-terminus, the 84-residue chain is Large ribosomal subunit protein bL31B (84 aa).

It belongs to the bacterial ribosomal protein bL31 family. Type B subfamily. As to quaternary structure, part of the 50S ribosomal subunit.

The polypeptide is Large ribosomal subunit protein bL31B (Photorhabdus laumondii subsp. laumondii (strain DSM 15139 / CIP 105565 / TT01) (Photorhabdus luminescens subsp. laumondii)).